Here is a 1200-residue protein sequence, read N- to C-terminus: Hyalin (1200 aa).

HYR domains are found at residues 1 to 39 (SSHNPGQSFTTGTTTTVVYTATDAFANVGQCAFTITVTA), 40 to 123 (TDTT…NVIE), 124 to 207 (VDTT…NVIE), 208 to 292 (VDTT…NVIE), 293 to 376 (VDTT…NVVE), 377 to 460 (VDTT…NVVE), 461 to 544 (VDTT…TVEE), 546 to 629 (VDTT…TVIA), 630 to 713 (VDTT…TISA), 714 to 797 (VDTT…VINA), 798 to 881 (VDTT…TIGT), 882 to 966 (VDTM…TVFA), 967 to 1050 (VDTT…TVTA), 1051 to 1133 (QDTT…TVNT), and 1134 to 1200 (QDTT…FFSD).

Homooligomer in presence of calcium. Post-translationally, glycosylated.

Its subcellular location is the secreted. The protein localises to the extracellular space. The protein resides in the extracellular matrix. Functionally, major constituent of the hyaline layer. The hyaline layer of echinoderm embryos is an extraembryonic matrix that functions as a substrate for cell adhesion through early development. The polypeptide is Hyalin (Strongylocentrotus purpuratus (Purple sea urchin)).